The sequence spans 287 residues: Viomycin phosphotransferase (287 aa).

D190 (proton acceptor) is an active-site residue.

It belongs to the aminoglycoside phosphotransferase family.

The catalysed reaction is viomycin + ATP = O-phosphoviomycin + ADP + H(+). Functionally, the aminoglycoside phosphotransferases achieve inactivation of their antibiotic substrates by phosphorylation. The protein is Viomycin phosphotransferase (vph) of Streptomyces vinaceus.